Here is a 348-residue protein sequence, read N- to C-terminus: Aspartate carbamoyltransferase catalytic subunit (348 aa).

Carbamoyl phosphate-binding residues include Arg59 and Thr60. Lys87 contacts L-aspartate. Residues Arg109, His142, and Gln145 each contribute to the carbamoyl phosphate site. L-aspartate-binding residues include Arg182 and Arg253. 2 residues coordinate carbamoyl phosphate: Gly294 and Pro295.

This sequence belongs to the aspartate/ornithine carbamoyltransferase superfamily. ATCase family. As to quaternary structure, heterododecamer (2C3:3R2) of six catalytic PyrB chains organized as two trimers (C3), and six regulatory PyrI chains organized as three dimers (R2).

The catalysed reaction is carbamoyl phosphate + L-aspartate = N-carbamoyl-L-aspartate + phosphate + H(+). The protein operates within pyrimidine metabolism; UMP biosynthesis via de novo pathway; (S)-dihydroorotate from bicarbonate: step 2/3. Its function is as follows. Catalyzes the condensation of carbamoyl phosphate and aspartate to form carbamoyl aspartate and inorganic phosphate, the committed step in the de novo pyrimidine nucleotide biosynthesis pathway. The polypeptide is Aspartate carbamoyltransferase catalytic subunit (Prochlorococcus marinus (strain MIT 9313)).